A 397-amino-acid polypeptide reads, in one-letter code: Putative galactokinase (397 aa).

Ser-78 serves as a coordination point for ATP. The active-site Proton acceptor is Asp-182.

Belongs to the GHMP kinase family. GalK subfamily.

It localises to the cytoplasm. It carries out the reaction alpha-D-galactose + ATP = alpha-D-galactose 1-phosphate + ADP + H(+). The protein operates within carbohydrate metabolism; galactose metabolism. Catalyzes the transfer of the gamma-phosphate of ATP to D-galactose to form alpha-D-galactose-1-phosphate (Gal-1-P). This is Putative galactokinase (galK) from Treponema pallidum (strain Nichols).